The chain runs to 200 residues: Glycosyl hydrolase family 19 domain-containing protein HI_1415 (200 aa).

This sequence belongs to the glycosyl hydrolase 19 family.

This is Glycosyl hydrolase family 19 domain-containing protein HI_1415 from Haemophilus influenzae (strain ATCC 51907 / DSM 11121 / KW20 / Rd).